We begin with the raw amino-acid sequence, 840 residues long: Probable inorganic carbon transporter subunit DabA (840 aa).

Cysteine 355, aspartate 357, histidine 539, and cysteine 554 together coordinate Zn(2+).

The protein belongs to the inorganic carbon transporter (TC 9.A.2) DabA family. As to quaternary structure, forms a complex with DabB. The cofactor is Zn(2+).

It is found in the cell membrane. Part of an energy-coupled inorganic carbon pump. The polypeptide is Probable inorganic carbon transporter subunit DabA (Roseiflexus castenholzii (strain DSM 13941 / HLO8)).